Here is a 463-residue protein sequence, read N- to C-terminus: Argininosuccinate lyase (463 aa).

This sequence belongs to the lyase 1 family. Argininosuccinate lyase subfamily.

It localises to the cytoplasm. The catalysed reaction is 2-(N(omega)-L-arginino)succinate = fumarate + L-arginine. It functions in the pathway amino-acid biosynthesis; L-arginine biosynthesis; L-arginine from L-ornithine and carbamoyl phosphate: step 3/3. The chain is Argininosuccinate lyase from Streptococcus pneumoniae (strain JJA).